Consider the following 576-residue polypeptide: uncharacterized protein (576 aa).

Positions 1–28 (MLRLNGLRVLLRTLAAIGALLTTASASA) are cleaved as a signal peptide. Serine 185 serves as the catalytic Acyl-ester intermediate. Cystine bridges form between cysteine 252-cysteine 269 and cysteine 278-cysteine 286. Ca(2+) contacts are provided by aspartate 253, aspartate 256, aspartate 260, and valine 262. Catalysis depends on charge relay system residues aspartate 414 and histidine 464. A disulfide bond links cysteine 529 and cysteine 551.

Belongs to the tannase family.

This is an uncharacterized protein from Xanthomonas campestris pv. campestris (strain ATCC 33913 / DSM 3586 / NCPPB 528 / LMG 568 / P 25).